The sequence spans 154 residues: Myoglobin (154 aa).

The Globin domain maps to 2-148; that stretch reads GLSDGEWQLV…FRNDMAAKYK (147 aa). Ser-4 is modified (phosphoserine). Position 65 (His-65) interacts with nitrite. His-65 lines the O2 pocket. Thr-68 carries the post-translational modification Phosphothreonine. His-94 contributes to the heme b binding site.

Belongs to the globin family. In terms of assembly, monomeric.

Its subcellular location is the cytoplasm. The protein resides in the sarcoplasm. The enzyme catalyses Fe(III)-heme b-[protein] + nitric oxide + H2O = Fe(II)-heme b-[protein] + nitrite + 2 H(+). The catalysed reaction is H2O2 + AH2 = A + 2 H2O. Functionally, monomeric heme protein which primary function is to store oxygen and facilitate its diffusion within muscle tissues. Reversibly binds oxygen through a pentacoordinated heme iron and enables its timely and efficient release as needed during periods of heightened demand. Depending on the oxidative conditions of tissues and cells, and in addition to its ability to bind oxygen, it also has a nitrite reductase activity whereby it regulates the production of bioactive nitric oxide. Under stress conditions, like hypoxia and anoxia, it also protects cells against reactive oxygen species thanks to its pseudoperoxidase activity. The chain is Myoglobin (MB) from Aotus trivirgatus (Three-striped night monkey).